We begin with the raw amino-acid sequence, 233 residues long: Type II methyltransferase M.MunI (233 aa).

The protein belongs to the MT-A70-like family.

The enzyme catalyses a 2'-deoxyadenosine in DNA + S-adenosyl-L-methionine = an N(6)-methyl-2'-deoxyadenosine in DNA + S-adenosyl-L-homocysteine + H(+). In terms of biological role, a methylase that recognizes the double-stranded sequence 5'-CAATTG-3', methylates A-3 on both strands, and protects the DNA from cleavage by the MunI endonuclease. The chain is Type II methyltransferase M.MunI from Mycoplasma sp.